The chain runs to 416 residues: MIFKFSQKALVALYLVVGLAEAVPSKSRVVSRASTFDYNGIVRGVNIGGWLVLEPWITPSIFDNAGDAAVDEWTLTATLGQDQAKAVLSQHWSTFITQDDFQQIAQAGMNHVRIPIGYWAVSSLPDEPYVDGQLEYLDNAISWAREAGLKVVIDLHGAPGSQNGFDNSGRKGPIAWQQGDTVSQTVDAFRALAERYLPQSDVVTAIEALNEPNIPGGVSEAGLRDYYNQIADVVRQIDPDTSVFLSDGFLSTESWNGFKTGEDVVMDTHHYEMFDNYLISLDIDGHVKSACDFGKQIEGSDKPVVVGEWSGAVTDCTKHLNGKGVSTRYQGEYANNVKYGDCANTTQGSVADLSDQERTDTRRFIEAQLDAYEGKNGWLFWTWKTEGAPGWDMQDLLANGVFPSPLTDRQFPNQCA.

The first 22 residues, 1–22 (MIFKFSQKALVALYLVVGLAEA), serve as a signal peptide directing secretion. Glu211 acts as the Proton donor in catalysis. 2 disulfide bridges follow: Cys291–Cys415 and Cys316–Cys342. The Nucleophile role is filled by Glu308. A glycan (N-linked (GlcNAc...) asparagine) is linked at Asn344.

The protein belongs to the glycosyl hydrolase 5 (cellulase A) family. As to quaternary structure, monomer. Requires Mn(2+) as cofactor.

The protein resides in the secreted. The catalysed reaction is Successive hydrolysis of beta-D-glucose units from the non-reducing ends of (1-&gt;3)-beta-D-glucans, releasing alpha-glucose.. Its function is as follows. Beta-glucanases participate in the metabolism of beta-glucan, the main structural component of the cell wall. It could also function biosynthetically as a transglycosylase. This Aspergillus fumigatus (strain CBS 144.89 / FGSC A1163 / CEA10) (Neosartorya fumigata) protein is Probable glucan 1,3-beta-glucosidase A (exgA).